The sequence spans 525 residues: Keratin, type II cytoskeletal 71 (525 aa).

Residues 1–131 (MSRQFTCKSG…DPEIQKVRAQ (131 aa)) form a head region. The segment at 132–167 (EREQIKALNNKFASFIDKVRFLEQQNQVLETKWELL) is coil 1A. The IF rod domain maps to 132 to 445 (EREQIKALNN…KLLESEECRM (314 aa)). Residues 168–186 (QQLDLNNCKNNLEPILEGY) form a linker 1 region. Residues 187–278 (ISNLRKQLET…CLYEAEIAQI (92 aa)) form a coil 1B region. Residues 279-302 (QSHISDMSVILSMDNNRDLNLDSI) form a linker 12 region. The segment at 303–441 (IDEVRAQYED…ATYRKLLESE (139 aa)) is coil 2. Residues 442–525 (ECRMSGEFPS…LSAPSKKASR (84 aa)) form a tail region. The segment at 492–525 (VRGGESRSRSSTTDYKDALGKGSSLSAPSKKASR) is disordered. Residues 495–510 (GESRSRSSTTDYKDAL) show a composition bias toward basic and acidic residues.

The protein belongs to the intermediate filament family. In terms of assembly, heterodimer of a type I and a type II keratin. Associates with KRT16 and/or KRT17.

It is found in the cytoplasm. The protein resides in the cytoskeleton. In terms of biological role, plays a central role in hair formation. Essential component of keratin intermediate filaments in the inner root sheath (IRS) of the hair follicle. The sequence is that of Keratin, type II cytoskeletal 71 (KRT71) from Bos taurus (Bovine).